Here is a 445-residue protein sequence, read N- to C-terminus: Argininosuccinate synthase (445 aa).

Residues 17–25 (AFSGGLDTS) and Ala-43 each bind ATP. Position 99 (Tyr-99) interacts with L-citrulline. 2 residues coordinate ATP: Gly-129 and Thr-131. L-aspartate is bound by residues Thr-131, Asn-135, and Asp-136. Asn-135 is a binding site for L-citrulline. An ATP-binding site is contributed by Asp-136. The L-citrulline site is built by Arg-139 and Ser-192. Asp-194 provides a ligand contact to ATP. Residues Thr-201, Glu-203, and Glu-280 each contribute to the L-citrulline site.

It belongs to the argininosuccinate synthase family. Type 2 subfamily. As to quaternary structure, homotetramer.

It is found in the cytoplasm. It catalyses the reaction L-citrulline + L-aspartate + ATP = 2-(N(omega)-L-arginino)succinate + AMP + diphosphate + H(+). Its pathway is amino-acid biosynthesis; L-arginine biosynthesis; L-arginine from L-ornithine and carbamoyl phosphate: step 2/3. This Ralstonia nicotianae (strain ATCC BAA-1114 / GMI1000) (Ralstonia solanacearum) protein is Argininosuccinate synthase (argG).